The sequence spans 509 residues: Heat shock 70 kDa protein 14-A (509 aa).

The protein belongs to the heat shock protein 70 family. As to quaternary structure, component of ribosome-associated complex (RAC).

It localises to the cytoplasm. It is found in the cytosol. Component of the ribosome-associated complex (RAC), a complex involved in folding or maintaining nascent polypeptides in a folding-competent state. This is Heat shock 70 kDa protein 14-A (hspa14-a) from Xenopus laevis (African clawed frog).